The sequence spans 141 residues: uncharacterized protein (141 aa).

This sequence belongs to the peptidase C56 family.

This is an uncharacterized protein from Streptomyces lividans.